The following is a 512-amino-acid chain: MVTRDETAEAEGLRPAVGSSRVRTYQVRTYGCQMNVHDSERLSGLLESAGYQRAAEGTDADIVVFNTCAVRENADNKLYGNLSHLAPRKQADPNMQIAVGGCLAQKDRDAVLRRAPWVDVVFGTHNIGSLPTLLERARHNREAQVEIVEALQEFPSALPASRESAYAAWVSISVGCNNTCTFCIVPSLRGKEVDRRPGDILAEVQSLVDQGVLEITLLGQNVNAYGVSFADPELPRDRGAFAKLLRACGGIDGLERVRFTSPHPAEFTDDVIEAMAATPNVCPTLHMPLQSGSDRILKAMRRSYRAERFLGIIDKVRAAIPHAAITTDLIVGFPGETEEDFQATLDVVEQARFAGAFTFQYSKRPGTPAADMPDQLPKSVVTERYQRLIELQERISLEQNREQVGRAVELLVATGEGRKDASTARMSGRARDGRLVHFLPGDNEIRPGDIVTTTVTGAAPHHLIADAPIIERRRTRAGDAHAAGQKPRTGVGLGMPRIGAPAPSATAEGCGC.

In terms of domain architecture, MTTase N-terminal spans 23–139 (RTYQVRTYGC…LPTLLERARH (117 aa)). [4Fe-4S] cluster contacts are provided by cysteine 32, cysteine 68, cysteine 102, cysteine 176, cysteine 180, and cysteine 183. The region spanning 162 to 398 (RESAYAAWVS…IELQERISLE (237 aa)) is the Radical SAM core domain. The region spanning 401–469 (REQVGRAVEL…PHHLIADAPI (69 aa)) is the TRAM domain. A disordered region spans residues 477–512 (AGDAHAAGQKPRTGVGLGMPRIGAPAPSATAEGCGC).

It belongs to the methylthiotransferase family. MiaB subfamily. In terms of assembly, monomer. Requires [4Fe-4S] cluster as cofactor.

It localises to the cytoplasm. It carries out the reaction N(6)-dimethylallyladenosine(37) in tRNA + (sulfur carrier)-SH + AH2 + 2 S-adenosyl-L-methionine = 2-methylsulfanyl-N(6)-dimethylallyladenosine(37) in tRNA + (sulfur carrier)-H + 5'-deoxyadenosine + L-methionine + A + S-adenosyl-L-homocysteine + 2 H(+). Functionally, catalyzes the methylthiolation of N6-(dimethylallyl)adenosine (i(6)A), leading to the formation of 2-methylthio-N6-(dimethylallyl)adenosine (ms(2)i(6)A) at position 37 in tRNAs that read codons beginning with uridine. The sequence is that of tRNA-2-methylthio-N(6)-dimethylallyladenosine synthase from Mycolicibacterium smegmatis (strain ATCC 700084 / mc(2)155) (Mycobacterium smegmatis).